A 511-amino-acid chain; its full sequence is V-type proton ATPase subunit B, brain isoform (511 aa).

Residue Arg400 coordinates ATP.

The protein belongs to the ATPase alpha/beta chains family. As to quaternary structure, V-ATPase is a heteromultimeric enzyme made up of two complexes: the ATP-hydrolytic V1 complex and the proton translocation V0 complex. The V1 complex consists of three catalytic AB heterodimers that form a heterohexamer, three peripheral stalks each consisting of EG heterodimers, one central rotor including subunits D and F, and the regulatory subunits C and H. The proton translocation complex V0 consists of the proton transport subunit a, a ring of proteolipid subunits c9c'', rotary subunit d, subunits e and f, and the accessory subunits ATP6AP1/Ac45 and ATP6AP2/PRR.

The protein localises to the apical cell membrane. Its subcellular location is the melanosome. The protein resides in the cytoplasm. It localises to the cytoplasmic vesicle. It is found in the secretory vesicle. The protein localises to the synaptic vesicle membrane. Its subcellular location is the clathrin-coated vesicle membrane. Its function is as follows. Non-catalytic subunit of the V1 complex of vacuolar(H+)-ATPase (V-ATPase), a multisubunit enzyme composed of a peripheral complex (V1) that hydrolyzes ATP and a membrane integral complex (V0) that translocates protons. V-ATPase is responsible for acidifying and maintaining the pH of intracellular compartments and in some cell types, is targeted to the plasma membrane, where it is responsible for acidifying the extracellular environment. In renal intercalated cells, can partially compensate the lack of ATP6V1B1 and mediate secretion of protons (H+) into the urine under base-line conditions but not in conditions of acid load. This Pongo abelii (Sumatran orangutan) protein is V-type proton ATPase subunit B, brain isoform (ATP6V1B2).